Here is a 116-residue protein sequence, read N- to C-terminus: RNA guanine-N7 methyltransferase activating subunit (116 aa).

The segment at 1–55 is interaction with RNMT; sequence MAEALGAQELYEKMFEQRFTANDKEYQEYLKREQDQPPIVEDWKMGNQRNTDRYR. The interval 31–116 is disordered; the sequence is KREQDQPPIV…SNQRFHSDRY (86 aa). The short motif at 36 to 42 is the RNMT-activating domain element; it reads QPPIVED. Positions 56 to 116 are RNA-binding; it reads DNRHHRGWDG…SNQRFHSDRY (61 aa). Low complexity predominate over residues 67–78; sequence QNWSSNSYNQSY. Polar residues predominate over residues 97-110; sequence YQQGHYTHNPSNQR.

The protein belongs to the RAM family.

Its subcellular location is the nucleus. Its function is as follows. Regulatory subunit of the mRNA-capping methyltransferase RNMT:RAMAC complex that methylates the N7 position of the added guanosine to the 5'-cap structure of mRNAs. Promotes the recruitment of the methyl donor, S-adenosyl-L-methionine, to RNMT. Regulates RNMT expression by a post-transcriptional stabilizing mechanism. Binds RNA. The polypeptide is RNA guanine-N7 methyltransferase activating subunit (ramac) (Xenopus tropicalis (Western clawed frog)).